The primary structure comprises 223 residues: HTH-type transcriptional dual regulator CecR (223 aa).

An HTH tetR-type domain is found at 11–70 (EQAKKQLIAAALAQFGEYGMNATTREIAAQAGQNIAAITYYFGSKEDLYLACAQWIADFI). The segment at residues 33–52 (TTREIAAQAGQNIAAITYYF) is a DNA-binding region (H-T-H motif).

Its subcellular location is the cytoplasm. Functionally, regulates transcription of the cecR-ybhGFSR operon and the rhlE gene, which altogether are involved in the control of sensitivity to cefoperazone and chloramphenicol. Represses the cecR-ybhGFSR operon and activates the rhlE operon. Acts by binding to a palindromic sequence within the intergenic spacer located between these two divergently transcribed operons. The protein is HTH-type transcriptional dual regulator CecR of Shigella flexneri.